A 96-amino-acid polypeptide reads, in one-letter code: UPF0235 protein YggU (96 aa).

Belongs to the UPF0235 family.

This chain is UPF0235 protein YggU, found in Shigella flexneri.